We begin with the raw amino-acid sequence, 86 residues long: Large ribosomal subunit protein eL43 (86 aa).

Residues 38–59 form a C4-type zinc finger; it reads CPVCGRKAVRRISTGIWQCQKC.

It belongs to the eukaryotic ribosomal protein eL43 family. Requires Zn(2+) as cofactor.

The sequence is that of Large ribosomal subunit protein eL43 from Thermococcus onnurineus (strain NA1).